The primary structure comprises 84 residues: uncharacterized protein (84 aa).

This is an uncharacterized protein from Acidianus convivator (ATV).